The primary structure comprises 548 residues: Chaperonin GroEL (548 aa).

Residues 29–32, K50, 86–90, G414, 478–480, and D494 each bind ATP; these read TMGP, DGTTT, and NAA.

This sequence belongs to the chaperonin (HSP60) family. As to quaternary structure, forms a cylinder of 14 subunits composed of two heptameric rings stacked back-to-back. Interacts with the co-chaperonin GroES.

The protein resides in the cytoplasm. It catalyses the reaction ATP + H2O + a folded polypeptide = ADP + phosphate + an unfolded polypeptide.. Functionally, together with its co-chaperonin GroES, plays an essential role in assisting protein folding. The GroEL-GroES system forms a nano-cage that allows encapsulation of the non-native substrate proteins and provides a physical environment optimized to promote and accelerate protein folding. The chain is Chaperonin GroEL from Legionella pneumophila (strain Paris).